A 250-amino-acid polypeptide reads, in one-letter code: Coproheme decarboxylase (250 aa).

Fe-coproporphyrin III is bound by residues Arg-131, 145–149 (YPMNK), His-172, and Gln-185. The active site involves Tyr-145.

The protein belongs to the ChdC family. Type 1 subfamily. Requires Fe-coproporphyrin III as cofactor.

It catalyses the reaction Fe-coproporphyrin III + 2 H2O2 + 2 H(+) = heme b + 2 CO2 + 4 H2O. It carries out the reaction Fe-coproporphyrin III + H2O2 + H(+) = harderoheme III + CO2 + 2 H2O. The enzyme catalyses harderoheme III + H2O2 + H(+) = heme b + CO2 + 2 H2O. Its pathway is porphyrin-containing compound metabolism; protoheme biosynthesis. Functionally, involved in coproporphyrin-dependent heme b biosynthesis. Catalyzes the decarboxylation of Fe-coproporphyrin III (coproheme) to heme b (protoheme IX), the last step of the pathway. The reaction occurs in a stepwise manner with a three-propionate intermediate. The sequence is that of Coproheme decarboxylase from Staphylococcus aureus (strain bovine RF122 / ET3-1).